We begin with the raw amino-acid sequence, 88 residues long: MARVTVQDAVEKIGNRFDLILTAARRARQLQLNQSVPLVPEDNDKPTVIALREIEKGLINQDIMDAQEFQKMAKVQETEEAAVALITE.

The protein belongs to the RNA polymerase subunit omega family. The RNAP catalytic core consists of 2 alpha, 1 beta, 1 beta' and 1 omega subunit. When a sigma factor is associated with the core the holoenzyme is formed, which can initiate transcription.

It catalyses the reaction RNA(n) + a ribonucleoside 5'-triphosphate = RNA(n+1) + diphosphate. In terms of biological role, promotes RNA polymerase assembly. Latches the N- and C-terminal regions of the beta' subunit thereby facilitating its interaction with the beta and alpha subunits. The protein is DNA-directed RNA polymerase subunit omega of Haemophilus influenzae (strain PittEE).